The chain runs to 166 residues: MSYVALGVDPGLLRTGWAVVEYDGLCNVRYIDSGIVKTASQGSLSARLEKIHRGISDVIEKVNPSVAVLEKVFVNNNPYSSLNLAYCRGALILTLALKGLFIVEFAPSVLKKRITGNGRATKAQVKYMVEQLLGLDPCLSKYSDLYDALALAASVTRYDIMEAKGT.

Residues D9, E70, and D144 contribute to the active site. Positions 9, 70, and 144 each coordinate Mg(2+).

It belongs to the RuvC family. As to quaternary structure, homodimer which binds Holliday junction (HJ) DNA. The HJ becomes 2-fold symmetrical on binding to RuvC with unstacked arms; it has a different conformation from HJ DNA in complex with RuvA. In the full resolvosome a probable DNA-RuvA(4)-RuvB(12)-RuvC(2) complex forms which resolves the HJ. It depends on Mg(2+) as a cofactor.

It is found in the cytoplasm. The enzyme catalyses Endonucleolytic cleavage at a junction such as a reciprocal single-stranded crossover between two homologous DNA duplexes (Holliday junction).. In terms of biological role, the RuvA-RuvB-RuvC complex processes Holliday junction (HJ) DNA during genetic recombination and DNA repair. Endonuclease that resolves HJ intermediates. Cleaves cruciform DNA by making single-stranded nicks across the HJ at symmetrical positions within the homologous arms, yielding a 5'-phosphate and a 3'-hydroxyl group; requires a central core of homology in the junction. The consensus cleavage sequence is 5'-(A/T)TT(C/G)-3'. Cleavage occurs on the 3'-side of the TT dinucleotide at the point of strand exchange. HJ branch migration catalyzed by RuvA-RuvB allows RuvC to scan DNA until it finds its consensus sequence, where it cleaves and resolves the cruciform DNA. This chain is Crossover junction endodeoxyribonuclease RuvC, found in Neorickettsia sennetsu (strain ATCC VR-367 / Miyayama) (Ehrlichia sennetsu).